Reading from the N-terminus, the 197-residue chain is Probable adenylyl-sulfate kinase (197 aa).

ATP is bound at residue 33–40 (GLSGSGKS). The active-site Phosphoserine intermediate is S107.

The protein belongs to the APS kinase family.

The enzyme catalyses adenosine 5'-phosphosulfate + ATP = 3'-phosphoadenylyl sulfate + ADP + H(+). The protein operates within sulfur metabolism; hydrogen sulfide biosynthesis; sulfite from sulfate: step 2/3. Catalyzes the synthesis of activated sulfate. This Bacillus subtilis (strain 168) protein is Probable adenylyl-sulfate kinase (cysC).